The primary structure comprises 389 residues: Phospho-N-acetylmuramoyl-pentapeptide-transferase (389 aa).

A run of 10 helical transmembrane segments spans residues 25–45, 73–93, 97–117, 135–155, 190–210, 222–242, 258–278, 286–306, 311–331, and 366–386; these read RAVM…PWVI, TMGG…WADL, FIWI…VDDY, FWQT…VSEI, VSYP…IVGS, GLVI…AYVM, GAGE…AFLW, VFMG…IAVI, IVLF…MMQV, and QVVV…LSSL.

It belongs to the glycosyltransferase 4 family. MraY subfamily. It depends on Mg(2+) as a cofactor.

It is found in the cell inner membrane. It carries out the reaction UDP-N-acetyl-alpha-D-muramoyl-L-alanyl-gamma-D-glutamyl-meso-2,6-diaminopimeloyl-D-alanyl-D-alanine + di-trans,octa-cis-undecaprenyl phosphate = di-trans,octa-cis-undecaprenyl diphospho-N-acetyl-alpha-D-muramoyl-L-alanyl-D-glutamyl-meso-2,6-diaminopimeloyl-D-alanyl-D-alanine + UMP. It participates in cell wall biogenesis; peptidoglycan biosynthesis. In terms of biological role, catalyzes the initial step of the lipid cycle reactions in the biosynthesis of the cell wall peptidoglycan: transfers peptidoglycan precursor phospho-MurNAc-pentapeptide from UDP-MurNAc-pentapeptide onto the lipid carrier undecaprenyl phosphate, yielding undecaprenyl-pyrophosphoryl-MurNAc-pentapeptide, known as lipid I. This is Phospho-N-acetylmuramoyl-pentapeptide-transferase from Polynucleobacter asymbioticus (strain DSM 18221 / CIP 109841 / QLW-P1DMWA-1) (Polynucleobacter necessarius subsp. asymbioticus).